We begin with the raw amino-acid sequence, 118 residues long: UPF0102 protein Arth_2474 (118 aa).

The protein belongs to the UPF0102 family.

The protein is UPF0102 protein Arth_2474 of Arthrobacter sp. (strain FB24).